Reading from the N-terminus, the 433-residue chain is Serine--tRNA ligase (433 aa).

236–238 (TAE) lines the L-serine pocket. Position 267-269 (267-269 (RSE)) interacts with ATP. Position 290 (Glu-290) interacts with L-serine. 354–357 (EISS) provides a ligand contact to ATP. Ser-394 contributes to the L-serine binding site.

Belongs to the class-II aminoacyl-tRNA synthetase family. Type-1 seryl-tRNA synthetase subfamily. Homodimer. The tRNA molecule binds across the dimer.

It localises to the cytoplasm. The catalysed reaction is tRNA(Ser) + L-serine + ATP = L-seryl-tRNA(Ser) + AMP + diphosphate + H(+). It catalyses the reaction tRNA(Sec) + L-serine + ATP = L-seryl-tRNA(Sec) + AMP + diphosphate + H(+). It participates in aminoacyl-tRNA biosynthesis; selenocysteinyl-tRNA(Sec) biosynthesis; L-seryl-tRNA(Sec) from L-serine and tRNA(Sec): step 1/1. Its function is as follows. Catalyzes the attachment of serine to tRNA(Ser). Is also able to aminoacylate tRNA(Sec) with serine, to form the misacylated tRNA L-seryl-tRNA(Sec), which will be further converted into selenocysteinyl-tRNA(Sec). In Acidiphilium cryptum (strain JF-5), this protein is Serine--tRNA ligase.